The chain runs to 248 residues: Anamorsin homolog (248 aa).

The tract at residues 4–129 (FKGLQKSLYI…ETGSSARLSF (126 aa)) is N-terminal SAM-like domain. Positions 130-161 (AKKNASAVNVWKISGDDEELIDEEELLDEEDK) are linker. Positions 172, 181, 184, and 186 each coordinate [2Fe-2S] cluster. The fe-S binding site A stretch occupies residues 172–186 (CSTTGKRKACKNCSC). Positions 209, 212, 220, and 223 each coordinate [4Fe-4S] cluster. 2 consecutive short sequence motifs (cx2C motif) follow at residues 209 to 212 (CGNC) and 220 to 223 (CSTC). Residues 209-223 (CGNCYLGDAFRCSTC) form a fe-S binding site B region.

The protein belongs to the anamorsin family. In terms of assembly, monomer. The cofactor is [2Fe-2S] cluster. [4Fe-4S] cluster serves as cofactor.

Its subcellular location is the cytoplasm. It is found in the mitochondrion intermembrane space. In terms of biological role, component of the cytosolic iron-sulfur (Fe-S) protein assembly (CIA) machinery. Required for the maturation of extramitochondrial Fe-S proteins. Part of an electron transfer chain functioning in an early step of cytosolic Fe-S biogenesis, facilitating the de novo assembly of a [4Fe-4S] cluster on the cytosolic Fe-S scaffold complex. Electrons are transferred from NADPH via a FAD- and FMN-containing diflavin oxidoreductase. Together with the diflavin oxidoreductase, also required for the assembly of the diferric tyrosyl radical cofactor of ribonucleotide reductase (RNR), probably by providing electrons for reduction during radical cofactor maturation in the catalytic small subunit. The sequence is that of Anamorsin homolog from Drosophila melanogaster (Fruit fly).